The primary structure comprises 240 residues: Ubiquinone biosynthesis O-methyltransferase (240 aa).

Residues Arg-44, Gly-64, Asp-85, and Met-129 each contribute to the S-adenosyl-L-methionine site.

The protein belongs to the methyltransferase superfamily. UbiG/COQ3 family.

The enzyme catalyses a 3-demethylubiquinol + S-adenosyl-L-methionine = a ubiquinol + S-adenosyl-L-homocysteine + H(+). It catalyses the reaction a 3-(all-trans-polyprenyl)benzene-1,2-diol + S-adenosyl-L-methionine = a 2-methoxy-6-(all-trans-polyprenyl)phenol + S-adenosyl-L-homocysteine + H(+). It participates in cofactor biosynthesis; ubiquinone biosynthesis. In terms of biological role, O-methyltransferase that catalyzes the 2 O-methylation steps in the ubiquinone biosynthetic pathway. The sequence is that of Ubiquinone biosynthesis O-methyltransferase from Shigella flexneri serotype 5b (strain 8401).